Reading from the N-terminus, the 118-residue chain is Acidic phospholipase A2 homolog (118 aa).

Cystine bridges form between cysteine 11–cysteine 70, cysteine 25–cysteine 117, cysteine 27–cysteine 43, cysteine 42–cysteine 98, cysteine 49–cysteine 91, cysteine 59–cysteine 84, and cysteine 77–cysteine 89.

It belongs to the phospholipase A2 family. Group I subfamily. A49 sub-subfamily. As to expression, expressed by the venom gland.

The protein resides in the secreted. Its function is as follows. Snake venom phospholipase A2 (PLA2) homolog that lacks both catalytic and neurotoxicity activities. In Bungarus fasciatus (Banded krait), this protein is Acidic phospholipase A2 homolog.